The primary structure comprises 253 residues: Transposase for insertion sequence element IS904 (253 aa).

The Integrase catalytic domain maps to 90–253; it reads KATAPNKVWL…SPKDFEKYNS (164 aa).

Belongs to the transposase IS3/IS150/IS904 family.

Involved in the transposition of the insertion sequence. The protein is Transposase for insertion sequence element IS904 (nisX1) of Lactococcus lactis subsp. lactis (strain IL1403) (Streptococcus lactis).